An 850-amino-acid chain; its full sequence is DNA mismatch repair protein MutS (850 aa).

Residue 608-615 (GPNMGGKS) participates in ATP binding.

It belongs to the DNA mismatch repair MutS family.

In terms of biological role, this protein is involved in the repair of mismatches in DNA. It is possible that it carries out the mismatch recognition step. This protein has a weak ATPase activity. The polypeptide is DNA mismatch repair protein MutS (Thiobacillus denitrificans (strain ATCC 25259 / T1)).